The following is a 92-amino-acid chain: Small ribosomal subunit protein uS19c (92 aa).

This sequence belongs to the universal ribosomal protein uS19 family.

The protein resides in the plastid. It localises to the chloroplast. Functionally, protein S19 forms a complex with S13 that binds strongly to the 16S ribosomal RNA. The sequence is that of Small ribosomal subunit protein uS19c from Nandina domestica (Heavenly bamboo).